A 252-amino-acid chain; its full sequence is Probable transcriptional regulatory protein Lxx10750 (252 aa).

This sequence belongs to the TACO1 family.

The protein localises to the cytoplasm. This Leifsonia xyli subsp. xyli (strain CTCB07) protein is Probable transcriptional regulatory protein Lxx10750.